A 210-amino-acid chain; its full sequence is Cytochrome c oxidase subunit 2 (210 aa).

Residues 1–15 (MSFILTFWMIFLMDS) are Mitochondrial intermembrane-facing. The chain crosses the membrane as a helical span at residues 16–36 (IIVLISFSIFLSVWICALIIA). Topologically, residues 37 to 63 (TVLTVTKINNIYCTWDFISSKFIDTYW) are mitochondrial matrix. The helical transmembrane segment at 64–84 (FVLGMMFILCLLLRLCLLLYF) threads the bilayer. Over 85–210 (SCINFVSFDL…GFMPIVINFI (126 aa)) the chain is Mitochondrial intermembrane. 6 residues coordinate Cu cation: His157, Cys192, Glu194, Cys196, His200, and Met203. Mg(2+) is bound at residue Glu194.

Belongs to the cytochrome c oxidase subunit 2 family. Component of the cytochrome c oxidase (complex IV, CIV), a multisubunit enzyme composed of a catalytic core of 3 subunits and several supernumerary subunits. The complex exists as a monomer or a dimer and forms supercomplexes (SCs) in the inner mitochondrial membrane with ubiquinol-cytochrome c oxidoreductase (cytochrome b-c1 complex, complex III, CIII). Requires Cu cation as cofactor.

Its subcellular location is the mitochondrion inner membrane. It catalyses the reaction 4 Fe(II)-[cytochrome c] + O2 + 8 H(+)(in) = 4 Fe(III)-[cytochrome c] + 2 H2O + 4 H(+)(out). Component of the cytochrome c oxidase, the last enzyme in the mitochondrial electron transport chain which drives oxidative phosphorylation. The respiratory chain contains 3 multisubunit complexes succinate dehydrogenase (complex II, CII), ubiquinol-cytochrome c oxidoreductase (cytochrome b-c1 complex, complex III, CIII) and cytochrome c oxidase (complex IV, CIV), that cooperate to transfer electrons derived from NADH and succinate to molecular oxygen, creating an electrochemical gradient over the inner membrane that drives transmembrane transport and the ATP synthase. Cytochrome c oxidase is the component of the respiratory chain that catalyzes the reduction of oxygen to water. Electrons originating from reduced cytochrome c in the intermembrane space (IMS) are transferred via the dinuclear copper A center (CU(A)) of subunit 2 and heme A of subunit 1 to the active site in subunit 1, a binuclear center (BNC) formed by heme A3 and copper B (CU(B)). The BNC reduces molecular oxygen to 2 water molecules using 4 electrons from cytochrome c in the IMS and 4 protons from the mitochondrial matrix. This chain is Cytochrome c oxidase subunit 2 (COXII), found in Trypanosoma brucei brucei.